Here is a 145-residue protein sequence, read N- to C-terminus: D-aminoacyl-tRNA deacylase (145 aa).

Residues 137–138 carry the Gly-cisPro motif, important for rejection of L-amino acids motif; it reads GP.

The protein belongs to the DTD family. In terms of assembly, homodimer.

It localises to the cytoplasm. The enzyme catalyses glycyl-tRNA(Ala) + H2O = tRNA(Ala) + glycine + H(+). It catalyses the reaction a D-aminoacyl-tRNA + H2O = a tRNA + a D-alpha-amino acid + H(+). Its function is as follows. An aminoacyl-tRNA editing enzyme that deacylates mischarged D-aminoacyl-tRNAs. Also deacylates mischarged glycyl-tRNA(Ala), protecting cells against glycine mischarging by AlaRS. Acts via tRNA-based rather than protein-based catalysis; rejects L-amino acids rather than detecting D-amino acids in the active site. By recycling D-aminoacyl-tRNA to D-amino acids and free tRNA molecules, this enzyme counteracts the toxicity associated with the formation of D-aminoacyl-tRNA entities in vivo and helps enforce protein L-homochirality. The protein is D-aminoacyl-tRNA deacylase of Pseudomonas putida (strain ATCC 700007 / DSM 6899 / JCM 31910 / BCRC 17059 / LMG 24140 / F1).